Consider the following 579-residue polypeptide: Nif-specific regulatory protein (579 aa).

A GAF domain is found at 40–187 (DPVAEVPQIF…MVASLLEQAL (148 aa)). The Sigma-54 factor interaction domain maps to 226–454 (IVGSSPAIAE…LENCVNRAAA (229 aa)). ATP contacts are provided by residues 254-261 (GESGTGKE) and 317-326 (ADGGTLFLDE). The inter-domain linker stretch occupies residues 464–536 (EELACRQGAC…PLRTKTAQLS (73 aa)). Residues Cys468 and Cys473 each coordinate a divalent metal cation. Residues 502–529 (RVSAPPPEPAPAPEPAPEAPPREEVPLR) form a disordered region. 7 repeat units span residues 505–506 (AP), 507–508 (PP), 509–510 (EP), 511–512 (AP), 513–514 (AP), 515–516 (EP), and 517–518 (AP). Positions 505–518 (APPPEPAPAPEPAP) are 7 X 2 AA tandem repeats of X-P. A compositionally biased stretch (pro residues) spans 505–520 (APPPEPAPAPEPAPEA). A C-terminal DNA-binding domain region spans residues 537 to 579 (REELLRALESAGWVQAKAARLLGMTPRQIAYALQKFEIELRKI). Residues 551–570 (QAKAARLLGMTPRQIAYALQ) constitute a DNA-binding region (H-T-H motif).

In terms of assembly, interacts with sigma-54.

Its function is as follows. Required for activation of most nif operons, which are directly involved in nitrogen fixation. This chain is Nif-specific regulatory protein (nifA1), found in Rhodobacter capsulatus (Rhodopseudomonas capsulata).